The sequence spans 346 residues: Peroxidase 38 (346 aa).

Residues 1–22 (MHSSLIKLGFLLLLLQVSLSHA) form the signal peptide. Glutamine 23 is modified (pyrrolidone carboxylic acid). 4 disulfide bridges follow: cysteine 33–cysteine 113, cysteine 66–cysteine 71, cysteine 119–cysteine 323, and cysteine 199–cysteine 231. Catalysis depends on histidine 64, which acts as the Proton acceptor. Ca(2+) is bound by residues aspartate 65, valine 68, glycine 70, aspartate 72, and serine 74. A glycan (N-linked (GlcNAc...) asparagine) is linked at asparagine 79. Proline 161 provides a ligand contact to substrate. Residue histidine 192 coordinates heme b. Threonine 193 serves as a coordination point for Ca(2+). The N-linked (GlcNAc...) asparagine glycan is linked to asparagine 236. Ca(2+) is bound by residues aspartate 244, threonine 247, and aspartate 252.

Belongs to the peroxidase family. Classical plant (class III) peroxidase subfamily. Requires heme b as cofactor. It depends on Ca(2+) as a cofactor.

The protein resides in the secreted. The protein localises to the vacuole. The catalysed reaction is 2 a phenolic donor + H2O2 = 2 a phenolic radical donor + 2 H2O. Functionally, removal of H(2)O(2), oxidation of toxic reductants, biosynthesis and degradation of lignin, suberization, auxin catabolism, response to environmental stresses such as wounding, pathogen attack and oxidative stress. These functions might be dependent on each isozyme/isoform in each plant tissue. This is Peroxidase 38 (PER38) from Arabidopsis thaliana (Mouse-ear cress).